A 69-amino-acid chain; its full sequence is Cytochrome b-c1 complex subunit 6-1, mitochondrial (69 aa).

Intrachain disulfides connect cysteine 17–cysteine 59 and cysteine 31–cysteine 45.

This sequence belongs to the UQCRH/QCR6 family. Component of the ubiquinol-cytochrome c oxidoreductase (cytochrome b-c1 complex, complex III, CIII), a multisubunit enzyme composed of 10 subunits. The complex is composed of 3 respiratory subunits cytochrome b (MT-CYB), cytochrome c1 (CYC1-1 or CYC1-2) and Rieske protein (UCR1-1 or UCR1-2), 2 core protein subunits MPPalpha1 (or MPPalpha2) and MPPB, and 5 low-molecular weight protein subunits QCR7-1 (or QCR7-2), UCRQ-1 (or UCRQ-2), QCR9, UCRY and probably QCR6-1 (or QCR6-2). The complex exists as an obligatory dimer and forms supercomplexes (SCs) in the inner mitochondrial membrane with NADH-ubiquinone oxidoreductase (complex I, CI), resulting in different assemblies (supercomplexes SCI(1)III(2) and SCI(2)III(4)).

It is found in the mitochondrion inner membrane. In terms of biological role, component of the ubiquinol-cytochrome c oxidoreductase, a multisubunit transmembrane complex that is part of the mitochondrial electron transport chain which drives oxidative phosphorylation. The respiratory chain contains 3 multisubunit complexes succinate dehydrogenase (complex II, CII), ubiquinol-cytochrome c oxidoreductase (cytochrome b-c1 complex, complex III, CIII) and cytochrome c oxidase (complex IV, CIV), that cooperate to transfer electrons derived from NADH and succinate to molecular oxygen, creating an electrochemical gradient over the inner membrane that drives transmembrane transport and the ATP synthase. The cytochrome b-c1 complex catalyzes electron transfer from ubiquinol to cytochrome c, linking this redox reaction to translocation of protons across the mitochondrial inner membrane, with protons being carried across the membrane as hydrogens on the quinol. In the process called Q cycle, 2 protons are consumed from the matrix, 4 protons are released into the intermembrane space and 2 electrons are passed to cytochrome c. The protein is Cytochrome b-c1 complex subunit 6-1, mitochondrial (QCR6-1) of Arabidopsis thaliana (Mouse-ear cress).